Here is a 477-residue protein sequence, read N- to C-terminus: Pyruvate kinase (477 aa).

Position 34 (arginine 34) interacts with substrate. K(+) is bound by residues asparagine 36, aspartate 64, and threonine 65. 36–39 is a binding site for ATP; that stretch reads NTAH. Residues arginine 71 and lysine 150 each coordinate ATP. A Mg(2+)-binding site is contributed by glutamate 216. Glycine 239, aspartate 240, and threonine 272 together coordinate substrate. Residue aspartate 240 participates in Mg(2+) binding.

This sequence belongs to the pyruvate kinase family. Homotetramer. Requires Mg(2+) as cofactor. It depends on K(+) as a cofactor.

The enzyme catalyses pyruvate + ATP = phosphoenolpyruvate + ADP + H(+). The protein operates within carbohydrate degradation; glycolysis; pyruvate from D-glyceraldehyde 3-phosphate: step 5/5. The chain is Pyruvate kinase (pyk) from Borreliella burgdorferi (strain ATCC 35210 / DSM 4680 / CIP 102532 / B31) (Borrelia burgdorferi).